The primary structure comprises 97 residues: MKFVAIFLVTCVLFSLFPSHLSQGEESRMNINAERRPWCPSKIQMFDTNCEVDGAKQCLDLLISTWDPSVRLTRVSCICSDFPYRNMMCSCPNMICP.

The signal sequence occupies residues 1-24 (MKFVAIFLVTCVLFSLFPSHLSQG). 4 disulfides stabilise this stretch: Cys39/Cys96, Cys50/Cys79, Cys58/Cys89, and Cys77/Cys91.

This sequence belongs to the DEFL family. In terms of tissue distribution, flower buds and stems.

Its subcellular location is the secreted. The protein is Defensin-like protein 246 (SCRL5) of Arabidopsis thaliana (Mouse-ear cress).